The primary structure comprises 262 residues: Adenosylcobinamide-GDP ribazoletransferase (262 aa).

Transmembrane regions (helical) follow at residues tyrosine 43 to glutamine 63, leucine 66 to phenylalanine 86, glycine 120 to leucine 140, alanine 146 to phenylalanine 166, leucine 191 to leucine 211, and alanine 242 to leucine 262.

It belongs to the CobS family. Mg(2+) is required as a cofactor.

The protein resides in the cell inner membrane. It catalyses the reaction alpha-ribazole + adenosylcob(III)inamide-GDP = adenosylcob(III)alamin + GMP + H(+). The catalysed reaction is alpha-ribazole 5'-phosphate + adenosylcob(III)inamide-GDP = adenosylcob(III)alamin 5'-phosphate + GMP + H(+). It participates in cofactor biosynthesis; adenosylcobalamin biosynthesis; adenosylcobalamin from cob(II)yrinate a,c-diamide: step 7/7. Joins adenosylcobinamide-GDP and alpha-ribazole to generate adenosylcobalamin (Ado-cobalamin). Also synthesizes adenosylcobalamin 5'-phosphate from adenosylcobinamide-GDP and alpha-ribazole 5'-phosphate. In Shewanella putrefaciens (strain CN-32 / ATCC BAA-453), this protein is Adenosylcobinamide-GDP ribazoletransferase.